Reading from the N-terminus, the 471-residue chain is Lincomycin resistance protein LmrB (471 aa).

A run of 13 helical transmembrane segments spans residues 15–34 (PIIASFLMAGFIGLFSETAL), 55–77 (LTTGYLLTLGILVPISGLLLQWF), 82–104 (LFFTAVSFSIAGTLIAALSPTFA), 111–131 (VVQAVGTALLLPLMFNTILLI), 141–163 (MGMIGLVIMFAPAVGPTISGLIL), 170–187 (WIFWISLPFLIIALLFGM), 202–224 (DILSIILSTLGFGGVVFAFSSAG), 231–253 (ATVLVSIIVGGIALGLFVWRQLT), 268–290 (MFTLGLILVFISFMMILSTMILL), 297–319 (SLALAAFSAGLVLLPGGVLNGLM), 329–351 (AYGPRALVIPGFIVAVIALFFLT), 358–380 (SALTIIVLHSVLMIGISMVMMPA), and 445–467 (GIQNAFVFGLIMACIGLLCSLFI).

Belongs to the major facilitator superfamily. EmrB family.

It localises to the cell membrane. Functionally, proton-dependent transporter. May mediate the efflux of lincomycin. The polypeptide is Lincomycin resistance protein LmrB (lmrB) (Listeria innocua serovar 6a (strain ATCC BAA-680 / CLIP 11262)).